We begin with the raw amino-acid sequence, 643 residues long: tRNA 5-methylaminomethyl-2-thiouridine biosynthesis bifunctional protein MnmC (643 aa).

Residues 1-223 (MPDRLVSATL…VDDRLVGDYA (223 aa)) are tRNA (mnm(5)s(2)U34)-methyltransferase. Residues 247–643 (IGAGLAGCAV…LRARRVGSAG (397 aa)) are FAD-dependent cmnm(5)s(2)U34 oxidoreductase.

In the N-terminal section; belongs to the methyltransferase superfamily. tRNA (mnm(5)s(2)U34)-methyltransferase family. It in the C-terminal section; belongs to the DAO family. FAD is required as a cofactor.

It localises to the cytoplasm. It carries out the reaction 5-aminomethyl-2-thiouridine(34) in tRNA + S-adenosyl-L-methionine = 5-methylaminomethyl-2-thiouridine(34) in tRNA + S-adenosyl-L-homocysteine + H(+). Functionally, catalyzes the last two steps in the biosynthesis of 5-methylaminomethyl-2-thiouridine (mnm(5)s(2)U) at the wobble position (U34) in tRNA. Catalyzes the FAD-dependent demodification of cmnm(5)s(2)U34 to nm(5)s(2)U34, followed by the transfer of a methyl group from S-adenosyl-L-methionine to nm(5)s(2)U34, to form mnm(5)s(2)U34. In Burkholderia orbicola (strain AU 1054), this protein is tRNA 5-methylaminomethyl-2-thiouridine biosynthesis bifunctional protein MnmC.